Here is a 1438-residue protein sequence, read N- to C-terminus: Lysophospholipase NTE1 (1438 aa).

The Cytoplasmic segment spans residues 1-25; sequence MDSDTSSADFHSTETLVSTPKYSYG. The chain crosses the membrane as a helical span at residues 26–46; that stretch reads VLINVILLVSWTCFRVVNWFL. Residues 47–64 lie on the Lumenal side of the membrane; sequence VTLPSILLGMLSKTFQIT. A helical membrane pass occupies residues 65–85; the sequence is LSLSSILMFVVAVTAICFLVV. At 86–1438 the chain is on the cytoplasmic side; it reads RYKYLTRYSR…HVSLSRRNSI (1353 aa). Residues 432–450 are compositionally biased toward polar residues; the sequence is YETQTIPNESEDSPTIQRS. A disordered region spans residues 432–464; sequence YETQTIPNESEDSPTIQRSSLRRRASHSTSLRK. Residues 590–720 and 707–856 contribute to the a nucleoside 3',5'-cyclic phosphate site; these read GDDS…LTID and RLKR…VANR. Residues 1131 to 1295 enclose the PNPLA domain; that stretch reads LVLGGGGSRG…LDNLPVSEMK (165 aa). The short motif at 1135–1140 is the GXGXXG element; sequence GGGSRG. Residues 1162–1166 carry the GXSXG motif; that stretch reads GTSIG. Residue Ser1164 is the Nucleophile of the active site. The active-site Proton acceptor is the Asp1282. Residues 1282–1284 carry the DGA/G motif; that stretch reads DGG.

This sequence belongs to the NTE family.

The protein resides in the endoplasmic reticulum membrane. The catalysed reaction is a 1-acyl-sn-glycero-3-phosphocholine + H2O = sn-glycerol 3-phosphocholine + a fatty acid + H(+). Inhibited by organophosphorus esters. Functionally, intracellular phospholipase B that catalyzes the double deacylation of phosphatidylcholine (PC) to glycerophosphocholine (GroPCho). Plays an important role in membrane lipid homeostasis. Responsible for the rapid PC turnover in response to inositol, elevated temperatures, or when choline is present in the growth medium. This chain is Lysophospholipase NTE1 (NTE1), found in Meyerozyma guilliermondii (strain ATCC 6260 / CBS 566 / DSM 6381 / JCM 1539 / NBRC 10279 / NRRL Y-324) (Yeast).